The primary structure comprises 346 residues: Holliday junction branch migration complex subunit RuvB (346 aa).

The segment at 1 to 183 (MTEQRIIASS…FGIVQRLEFY (183 aa)) is large ATPase domain (RuvB-L). ATP is bound by residues Ile-22, Arg-23, Gly-64, Lys-67, Thr-68, Thr-69, 130–132 (EDF), Arg-173, Tyr-183, and Arg-220. Position 68 (Thr-68) interacts with Mg(2+). The segment at 184–254 (SPQELTRIVS…VAQAAMQMLK (71 aa)) is small ATPAse domain (RuvB-S). Residues 257–346 (PEGFDELDRR…PGIGEPGDLF (90 aa)) form a head domain (RuvB-H) region. The DNA site is built by Arg-293, Arg-312, and Arg-317.

This sequence belongs to the RuvB family. Homohexamer. Forms an RuvA(8)-RuvB(12)-Holliday junction (HJ) complex. HJ DNA is sandwiched between 2 RuvA tetramers; dsDNA enters through RuvA and exits via RuvB. An RuvB hexamer assembles on each DNA strand where it exits the tetramer. Each RuvB hexamer is contacted by two RuvA subunits (via domain III) on 2 adjacent RuvB subunits; this complex drives branch migration. In the full resolvosome a probable DNA-RuvA(4)-RuvB(12)-RuvC(2) complex forms which resolves the HJ.

The protein resides in the cytoplasm. It catalyses the reaction ATP + H2O = ADP + phosphate + H(+). Its function is as follows. The RuvA-RuvB-RuvC complex processes Holliday junction (HJ) DNA during genetic recombination and DNA repair, while the RuvA-RuvB complex plays an important role in the rescue of blocked DNA replication forks via replication fork reversal (RFR). RuvA specifically binds to HJ cruciform DNA, conferring on it an open structure. The RuvB hexamer acts as an ATP-dependent pump, pulling dsDNA into and through the RuvAB complex. RuvB forms 2 homohexamers on either side of HJ DNA bound by 1 or 2 RuvA tetramers; 4 subunits per hexamer contact DNA at a time. Coordinated motions by a converter formed by DNA-disengaged RuvB subunits stimulates ATP hydrolysis and nucleotide exchange. Immobilization of the converter enables RuvB to convert the ATP-contained energy into a lever motion, pulling 2 nucleotides of DNA out of the RuvA tetramer per ATP hydrolyzed, thus driving DNA branch migration. The RuvB motors rotate together with the DNA substrate, which together with the progressing nucleotide cycle form the mechanistic basis for DNA recombination by continuous HJ branch migration. Branch migration allows RuvC to scan DNA until it finds its consensus sequence, where it cleaves and resolves cruciform DNA. The protein is Holliday junction branch migration complex subunit RuvB of Xanthomonas euvesicatoria pv. vesicatoria (strain 85-10) (Xanthomonas campestris pv. vesicatoria).